The primary structure comprises 502 residues: MEEFKRYLELDRSQQHDFIYPLIFQEYIYALAHDRGLNRSIVFENRDYDNKSSLLIRKRLITXXXXXXXXXXXXXXXXKNKFLGYNTNFDSQMIFEGFAVVVEIPFYLQLLSSLEGKEIVKSHNLRSLHSIFPXXXXXXXXXXXXXXXXXXXXXXMEILVRTLRYWVKDPSSLHLLRFFLHEYPNRNSLITPKKYSFSFSKRNQKFFLFLYNFHVCEYESIFVFLRNQSSHLCSISFETFLERILFYKKIELEVFVKDFKGILWVFKDPFLHYVRYRGKSILASNGSSLLMNKWKYYLVNFWECYFSIWAQPRRIHINQLSNNSFDFLGYLSSVRLKPSMVRTQMIENSFLIENASKKFDTLVPITPMIASLSKAKFCNVLGHPMNKXVWDGLSDSDIIERIGRLYXNLSHYYSGSLKKMNLXRIKFILRILLCGTLASKHKGTLRSVLNRLGVGLLVEFITEEEQVFYLTFQKASSTSRKLYQRRIWYLDIFCVNDTANHE.

This sequence belongs to the intron maturase 2 family. MatK subfamily.

It localises to the plastid. It is found in the chloroplast. Functionally, usually encoded in the trnK tRNA gene intron. Probably assists in splicing its own and other chloroplast group II introns. The sequence is that of Maturase K from Vaccinium vitis-idaea (Mountain cranberry).